We begin with the raw amino-acid sequence, 191 residues long: Protein GrpE (191 aa).

Belongs to the GrpE family. In terms of assembly, homodimer.

Its subcellular location is the cytoplasm. In terms of biological role, participates actively in the response to hyperosmotic and heat shock by preventing the aggregation of stress-denatured proteins, in association with DnaK and GrpE. It is the nucleotide exchange factor for DnaK and may function as a thermosensor. Unfolded proteins bind initially to DnaJ; upon interaction with the DnaJ-bound protein, DnaK hydrolyzes its bound ATP, resulting in the formation of a stable complex. GrpE releases ADP from DnaK; ATP binding to DnaK triggers the release of the substrate protein, thus completing the reaction cycle. Several rounds of ATP-dependent interactions between DnaJ, DnaK and GrpE are required for fully efficient folding. The polypeptide is Protein GrpE (Listeria monocytogenes serotype 1/2a (strain 10403S)).